The chain runs to 350 residues: uncharacterized protein (350 aa).

This is an uncharacterized protein from Sulfolobus islandicus filamentous virus (isolate Iceland/Hveragerdi) (SIFV).